We begin with the raw amino-acid sequence, 183 residues long: Protein SHI RELATED SEQUENCE 6 (183 aa).

Positions 41, 44, 52, 57, 61, and 68 each coordinate Zn(2+). The segment at residues 41-68 is a DNA-binding region (zn(2)-C6 fungal-type; degenerate); that stretch reads CRDCGNRAKKECLFERCRTCCKSRGYNC. Over residues 79–88 the composition is skewed to low complexity; the sequence is SSATRSSSSP. Residues 79–121 are disordered; the sequence is SSATRSSSSPSERKKKLKIDKQSSPNVSLLPTTTSRQERGFRE. A compositionally biased stretch (polar residues) spans 100–113; that stretch reads QSSPNVSLLPTTTS. The Required for homo- and heterodimerization motif lies at 157–160; it reads ISGH.

Belongs to the SHI protein family.

Its subcellular location is the nucleus. Functionally, transcription activator that binds DNA on 5'-ACTCTAC-3' and promotes auxin homeostasis-regulating gene expression (e.g. YUC genes), as well as genes affecting stamen development, cell expansion and timing of flowering. Synergistically with other SHI-related proteins, regulates gynoecium, stamen and leaf development in a dose-dependent manner, controlling apical-basal patterning. Promotes style and stigma formation, and influences vascular development during gynoecium development. May also have a role in the formation and/or maintenance of the shoot apical meristem (SAM). This Arabidopsis thaliana (Mouse-ear cress) protein is Protein SHI RELATED SEQUENCE 6 (SRS6).